The chain runs to 122 residues: Large ribosomal subunit protein uL14 (122 aa).

It belongs to the universal ribosomal protein uL14 family. In terms of assembly, part of the 50S ribosomal subunit. Forms a cluster with proteins L3 and L19. In the 70S ribosome, L14 and L19 interact and together make contacts with the 16S rRNA in bridges B5 and B8.

Functionally, binds to 23S rRNA. Forms part of two intersubunit bridges in the 70S ribosome. This Staphylococcus epidermidis (strain ATCC 35984 / DSM 28319 / BCRC 17069 / CCUG 31568 / BM 3577 / RP62A) protein is Large ribosomal subunit protein uL14.